The following is a 246-amino-acid chain: Sec-independent protein translocase protein TatB (246 aa).

A helical transmembrane segment spans residues 1 to 21 (MFDIGWSELLVIAVVLIVVVG). 3 disordered regions span residues 94–122 (SDLQ…APLV), 179–204 (SRSK…PKPT), and 225–246 (VADA…KDEA). 2 stretches are compositionally biased toward polar residues: residues 97–112 (QKAT…TAAP) and 187–197 (PETTVATNASE).

The protein belongs to the TatB family. As to quaternary structure, the Tat system comprises two distinct complexes: a TatABC complex, containing multiple copies of TatA, TatB and TatC subunits, and a separate TatA complex, containing only TatA subunits. Substrates initially bind to the TatABC complex, which probably triggers association of the separate TatA complex to form the active translocon.

The protein resides in the cell inner membrane. Part of the twin-arginine translocation (Tat) system that transports large folded proteins containing a characteristic twin-arginine motif in their signal peptide across membranes. Together with TatC, TatB is part of a receptor directly interacting with Tat signal peptides. TatB may form an oligomeric binding site that transiently accommodates folded Tat precursor proteins before their translocation. This is Sec-independent protein translocase protein TatB from Agrobacterium fabrum (strain C58 / ATCC 33970) (Agrobacterium tumefaciens (strain C58)).